A 430-amino-acid chain; its full sequence is Serine carboxypeptidase-like 13 (430 aa).

A signal peptide spans 1–22 (MSLTLEFLLLLIVLILSHHAHS). Cystine bridges form between cysteine 81–cysteine 319, cysteine 240–cysteine 254, and cysteine 278–cysteine 285. Asparagine 102 carries an N-linked (GlcNAc...) asparagine glycan. Residue serine 177 is part of the active site. Residues asparagine 299 and asparagine 323 are each glycosylated (N-linked (GlcNAc...) asparagine). Aspartate 355 is a catalytic residue. N-linked (GlcNAc...) asparagine glycosylation occurs at asparagine 371. The active site involves histidine 408.

Belongs to the peptidase S10 family. In terms of tissue distribution, expression not detected.

The protein resides in the secreted. It carries out the reaction 2 1-O-(trans-sinapoyl)-beta-D-glucose = 1,2-di-O-sinapoyl beta-D-glucose + D-glucose. Its function is as follows. Catalyzes the formation of 1,2-bis-O-sinapoyl beta-D-glucoside. The polypeptide is Serine carboxypeptidase-like 13 (SCPL13) (Arabidopsis thaliana (Mouse-ear cress)).